Here is a 600-residue protein sequence, read N- to C-terminus: Zinc metalloproteinase-disintegrin-like stejnihagin-A (600 aa).

The N-terminal stretch at 1–20 is a signal peptide; the sequence is MIEVLLVTICLAVFPYQGSS. The propeptide occupies 21 to 191; sequence IILESGNVND…KASQLVVTAE (171 aa). Pyrrolidone carboxylic acid is present on Gln192. The 192-residue stretch at 198 to 389 folds into the Peptidase M12B domain; the sequence is RYVKLAIVAD…YNPQCILNAP (192 aa). 3 disulfide bridges follow: Cys306–Cys384, Cys346–Cys368, and Cys348–Cys351. A glycan (N-linked (GlcNAc...) asparagine) is linked at Asn317. His331 is a binding site for Zn(2+). The active site involves Glu332. Zn(2+) is bound by residues His335 and His341. Asn367 is a glycosylation site (N-linked (GlcNAc...) asparagine). One can recognise a Disintegrin domain in the interval 397–483; sequence PPVCGNELLE…DCPTDDFHRN (87 aa). The Ca(2+) site is built by Val399, Asn402, Leu404, Glu406, Glu409, and Asp412. Cystine bridges form between Cys400/Cys429, Cys411/Cys424, Cys413/Cys419, Cys423/Cys446, Cys437/Cys443, Cys442/Cys468, Cys455/Cys475, Cys462/Cys494, Cys487/Cys499, Cys506/Cys556, Cys521/Cys565, Cys534/Cys544, Cys551/Cys587, and Cys581/Cys593. The D/ECD-tripeptide motif lies at 461–463; the sequence is ECD. A glycan (N-linked (GlcNAc...) asparagine) is linked at Asn568.

This sequence belongs to the venom metalloproteinase (M12B) family. P-III subfamily. P-IIIa sub-subfamily. Monomer. Zn(2+) serves as cofactor. Expressed by the venom gland.

It is found in the secreted. This metalloproteinase-disintegrin-like impairs hemostasis in the envenomed animal. In Trimeresurus stejnegeri (Chinese green tree viper), this protein is Zinc metalloproteinase-disintegrin-like stejnihagin-A.